An 89-amino-acid chain; its full sequence is Small ribosomal subunit protein bS20 (89 aa).

This sequence belongs to the bacterial ribosomal protein bS20 family.

Binds directly to 16S ribosomal RNA. This Wolbachia pipientis subsp. Culex pipiens (strain wPip) protein is Small ribosomal subunit protein bS20.